The sequence spans 147 residues: Hemoglobin subunit beta-1 (147 aa).

Ser2 carries the post-translational modification N-acetylserine. In terms of domain architecture, Globin spans 3–147 (FLSAEEKGLV…VASALAHRYH (145 aa)). The residue at position 18 (Lys18) is an N6-succinyllysine. Residues Ser45 and Ser51 each carry the phosphoserine modification. An N6-succinyllysine modification is found at Lys60. Heme b contacts are provided by His64 and His93. Arg105 is modified (asymmetric dimethylarginine).

Belongs to the globin family. As to quaternary structure, heterotetramer of two alpha chains and two beta chains. As to expression, red blood cells.

Its function is as follows. Involved in oxygen transport from the lung to the various peripheral tissues. This Panthera onca (Jaguar) protein is Hemoglobin subunit beta-1 (HBB1).